A 198-amino-acid chain; its full sequence is Dual specificity protein phosphatase 14 (198 aa).

The 142-residue stretch at 26–167 (GIAQITSSLF…LIDYESQLFG (142 aa)) folds into the Tyrosine-protein phosphatase domain. Cys111 functions as the Phosphocysteine intermediate in the catalytic mechanism.

Belongs to the protein-tyrosine phosphatase family. Non-receptor class dual specificity subfamily.

It catalyses the reaction O-phospho-L-tyrosyl-[protein] + H2O = L-tyrosyl-[protein] + phosphate. The catalysed reaction is O-phospho-L-seryl-[protein] + H2O = L-seryl-[protein] + phosphate. It carries out the reaction O-phospho-L-threonyl-[protein] + H2O = L-threonyl-[protein] + phosphate. Involved in the inactivation of MAP kinases. Dephosphorylates ERK, JNK and p38 MAP-kinases. Plays a negative role in TCR signaling by dephosphorylating MAP3K7 adapter TAB1 leading to its inactivation. The protein is Dual specificity protein phosphatase 14 (Dusp14) of Mus musculus (Mouse).